A 29-amino-acid polypeptide reads, in one-letter code: Cyclotide mang-A (29 aa).

The segment at residues G1 to D29 is a cross-link (cyclopeptide (Gly-Asp)). 3 disulfide bridges follow: C5-C19, C9-C21, and C14-C26.

Belongs to the cyclotide family. Moebius subfamily. Post-translationally, this is a cyclic peptide.

Probably participates in a plant defense mechanism. This chain is Cyclotide mang-A, found in Melicytus angustifolius (Hymenanthera angustifolia).